The sequence spans 642 residues: UvrABC system protein C (642 aa).

In terms of domain architecture, GIY-YIG spans 20–97 (ERCGVYRMFD…IKKFQPKFNI (78 aa)). The 36-residue stretch at 207–242 (KELQENLSKKMEELSSQMRFEEAAEIRDRIKALSYV) folds into the UVR domain.

The protein belongs to the UvrC family. In terms of assembly, interacts with UvrB in an incision complex.

The protein localises to the cytoplasm. The UvrABC repair system catalyzes the recognition and processing of DNA lesions. UvrC both incises the 5' and 3' sides of the lesion. The N-terminal half is responsible for the 3' incision and the C-terminal half is responsible for the 5' incision. The sequence is that of UvrABC system protein C from Rickettsia felis (strain ATCC VR-1525 / URRWXCal2) (Rickettsia azadi).